We begin with the raw amino-acid sequence, 593 residues long: Putative auxin response factor 15 (593 aa).

The TF-B3 DNA-binding region spans 126 to 228 (FTKVLTASDI…ELRVGIRRAR (103 aa)). The region spanning 511–592 (RTCTKVQMQG…MVKRIYIQKR (82 aa)) is the PB1 domain.

Belongs to the ARF family. In terms of assembly, homodimers and heterodimers.

It is found in the nucleus. Auxin response factors (ARFs) are transcriptional factors that bind specifically to the DNA sequence 5'-TGTCTC-3' found in the auxin-responsive promoter elements (AuxREs). Could act as transcriptional activator or repressor. Formation of heterodimers with Aux/IAA proteins may alter their ability to modulate early auxin response genes expression. This Arabidopsis thaliana (Mouse-ear cress) protein is Putative auxin response factor 15 (ARF15).